We begin with the raw amino-acid sequence, 341 residues long: MADGCCPGNTTAIPAVPTITTYPVKGGFRHALCLPSSCHSRMWQLVTCQESCQPSIGAPSGCDPASCQPTRLPATSCVGFVCQPMCSHAACYQSGTGQSPCLVSSCQPSCSESTCCQEKCCDASPCQQSSCQESVCMSGSCQAACGQSVCCDAGSCQPSCSEVTSCPETSCLPTICTASPCQPTWCQGSSCQPVSGEGQPCKSTYYQPICYIFKPCQSALYMPVPCQPSTCVFSSCNTTCCVPSHCQPPHCQLVPSTCFIYQPVANCQAPCSTKNCCKPASCDTVISGQPTCDGPPSYNQSGCKSACCVTGLGTSPSSGSNCLPTSCQPSCESSFCKATLC.

7 repeat units span residues 5 to 9 (CCPGN), 115 to 119 (CCQEK), 120 to 124 (CCDAS), 150 to 154 (CCDAG), 240 to 244 (CCVPS), 276 to 280 (CCKPA), and 307 to 311 (CCVTG). The 7 X 5 AA repeats of C-C-X(3) stretch occupies residues 5 to 311 (CCPGNTTAIP…GCKSACCVTG (307 aa)).

Belongs to the KRTAP type 10 family.

The polypeptide is Keratin-associated protein 29-1 (KRTAP29-1) (Homo sapiens (Human)).